Reading from the N-terminus, the 567-residue chain is Phenylalanine--tRNA ligase beta subunit (567 aa).

The B5 domain maps to 287-362; that stretch reads YFQEEVEFNV…IGEGLASFHP (76 aa). Residues aspartate 340, aspartate 346, glutamate 349, and aspartate 350 each coordinate Mg(2+).

The protein belongs to the phenylalanyl-tRNA synthetase beta subunit family. Type 2 subfamily. As to quaternary structure, tetramer of two alpha and two beta subunits. The cofactor is Mg(2+).

It localises to the cytoplasm. It catalyses the reaction tRNA(Phe) + L-phenylalanine + ATP = L-phenylalanyl-tRNA(Phe) + AMP + diphosphate + H(+). The polypeptide is Phenylalanine--tRNA ligase beta subunit (Borreliella afzelii (strain PKo) (Borrelia afzelii)).